The chain runs to 809 residues: Chorion peroxidase (809 aa).

The signal sequence occupies residues 1 to 21; sequence MSRILFILLLLIVTQLSELQA. Residues 22–223 constitute a propeptide that is removed on maturation; sequence AAFSVRQNRF…KFTETPLAHH (202 aa). The segment at 36–55 is disordered; that stretch reads DLQTPAPLATSTESSKKPEK. Residue Asn-110 is glycosylated (N-linked (GlcNAc...) asparagine). Cys-224 carries the post-translational modification N-acetylcysteine; in Chorion peroxidase light chain. Cys-230 and Cys-244 are disulfide-bonded. The active-site Proton acceptor is the His-320. Cys-448 and Cys-457 are oxidised to a cystine. His-568 is a binding site for heme b. Cys-765 and Cys-794 are disulfide-bonded.

The protein belongs to the peroxidase family. XPO subfamily. Heterodimer. Heme b is required as a cofactor. Expressed at low levels in the germarium and early follicles. Expression becomes progressively stronger during vitellogenesis, and is highly expressed in germ cells and somatic cells. A subset of follicle cells, termed border cells (BC), exhibit a high level of expression.

It localises to the secreted. It catalyses the reaction 2 a phenolic donor + H2O2 = 2 a phenolic radical donor + 2 H2O. Its function is as follows. Required for ovarian follicle maturation. Involved in the formation of a rigid and insoluble egg chorion by catalyzing chorion protein cross-linking through dityrosine formation and phenol oxidase-catalyzed chorion melanization. The protein is Chorion peroxidase (Pxt) of Drosophila melanogaster (Fruit fly).